A 115-amino-acid polypeptide reads, in one-letter code: MNMLVALSVNIALSMCLITIAFWLPQLNMYTEKANPYECGFDPMSSARLPFSMKFFLVAITFLLFDLEIALLLPLPWAIQMNNINTMMLTSFILVSVLALGLAYEWMQKGLEWTE.

3 consecutive transmembrane segments (helical) span residues 4–24 (LVAL…AFWL), 55–75 (FFLV…LLPL), and 87–107 (MMLT…YEWM).

It belongs to the complex I subunit 3 family. As to quaternary structure, core subunit of respiratory chain NADH dehydrogenase (Complex I) which is composed of 45 different subunits. Interacts with TMEM186. Interacts with TMEM242.

It is found in the mitochondrion inner membrane. It carries out the reaction a ubiquinone + NADH + 5 H(+)(in) = a ubiquinol + NAD(+) + 4 H(+)(out). Core subunit of the mitochondrial membrane respiratory chain NADH dehydrogenase (Complex I) which catalyzes electron transfer from NADH through the respiratory chain, using ubiquinone as an electron acceptor. Essential for the catalytic activity of complex I. In Habromys lophurus (Crested-tailed deer mouse), this protein is NADH-ubiquinone oxidoreductase chain 3.